Here is a 415-residue protein sequence, read N- to C-terminus: Mitochondrial distribution and morphology protein 12 (415 aa).

Residues 1–402 form the SMP-LTD domain; sequence MSFDINWSEL…WPSWVCFDLN (402 aa). Positions 53–146 are disordered; that stretch reads EITIRHIGDP…PPLTDLRRSR (94 aa). 2 stretches are compositionally biased toward acidic residues: residues 62–75 and 92–103; these read PFDDFYEDEGDDDE and NSSDDDEDDEYD.

Belongs to the MDM12 family. Component of the ER-mitochondria encounter structure (ERMES) or MDM complex, composed of MMM1, MDM10, MDM12 and MDM34. An MMM1 homodimer associates with one molecule of MDM12 on each side in a pairwise head-to-tail manner, and the SMP-LTD domains of MMM1 and MDM12 generate a continuous hydrophobic tunnel for phospholipid trafficking.

Its subcellular location is the mitochondrion outer membrane. It localises to the endoplasmic reticulum membrane. In terms of biological role, component of the ERMES/MDM complex, which serves as a molecular tether to connect the endoplasmic reticulum (ER) and mitochondria. Components of this complex are involved in the control of mitochondrial shape and protein biogenesis, and function in nonvesicular lipid trafficking between the ER and mitochondria. MDM12 is required for the interaction of the ER-resident membrane protein MMM1 and the outer mitochondrial membrane-resident beta-barrel protein MDM10. The MDM12-MMM1 subcomplex functions in the major beta-barrel assembly pathway that is responsible for biogenesis of all mitochondrial outer membrane beta-barrel proteins, and acts in a late step after the SAM complex. The MDM10-MDM12-MMM1 subcomplex further acts in the TOM40-specific pathway after the action of the MDM12-MMM1 complex. Essential for establishing and maintaining the structure of mitochondria and maintenance of mtDNA nucleoids. In Debaryomyces hansenii (strain ATCC 36239 / CBS 767 / BCRC 21394 / JCM 1990 / NBRC 0083 / IGC 2968) (Yeast), this protein is Mitochondrial distribution and morphology protein 12.